Here is a 252-residue protein sequence, read N- to C-terminus: Probable transcriptional regulatory protein Lxx10750 (252 aa).

The protein belongs to the TACO1 family.

Its subcellular location is the cytoplasm. The protein is Probable transcriptional regulatory protein Lxx10750 of Leifsonia xyli subsp. xyli (strain CTCB07).